Reading from the N-terminus, the 288-residue chain is Quinate/shikimate dehydrogenase (288 aa).

Substrate contacts are provided by Lys-71 and Asp-107. Residues 132–135 (AGGA), 155–158 (NRRD), Lys-205, 232–235 (CVYN), and Gly-255 contribute to the NAD(+) site.

It belongs to the shikimate dehydrogenase family. In terms of assembly, homodimer.

It carries out the reaction L-quinate + NAD(+) = 3-dehydroquinate + NADH + H(+). The catalysed reaction is L-quinate + NADP(+) = 3-dehydroquinate + NADPH + H(+). It catalyses the reaction shikimate + NADP(+) = 3-dehydroshikimate + NADPH + H(+). The enzyme catalyses shikimate + NAD(+) = 3-dehydroshikimate + NADH + H(+). The protein operates within metabolic intermediate biosynthesis; chorismate biosynthesis; chorismate from D-erythrose 4-phosphate and phosphoenolpyruvate: step 4/7. Its function is as follows. The actual biological function of YdiB remains unclear, nor is it known whether 3-dehydroshikimate or quinate represents the natural substrate. Catalyzes the reversible NAD-dependent reduction of both 3-dehydroshikimate (DHSA) and 3-dehydroquinate to yield shikimate (SA) and quinate, respectively. It can use both NAD or NADP for catalysis, however it has higher catalytic efficiency with NAD. This Escherichia coli (strain 55989 / EAEC) protein is Quinate/shikimate dehydrogenase.